The following is a 198-amino-acid chain: ATP-dependent Clp protease proteolytic subunit (198 aa).

Serine 101 functions as the Nucleophile in the catalytic mechanism. Histidine 126 is an active-site residue.

Belongs to the peptidase S14 family. Component of the chloroplastic Clp protease core complex.

Its subcellular location is the plastid. It is found in the chloroplast stroma. It catalyses the reaction Hydrolysis of proteins to small peptides in the presence of ATP and magnesium. alpha-casein is the usual test substrate. In the absence of ATP, only oligopeptides shorter than five residues are hydrolyzed (such as succinyl-Leu-Tyr-|-NHMec, and Leu-Tyr-Leu-|-Tyr-Trp, in which cleavage of the -Tyr-|-Leu- and -Tyr-|-Trp bonds also occurs).. In terms of biological role, cleaves peptides in various proteins in a process that requires ATP hydrolysis. Has a chymotrypsin-like activity. Plays a major role in the degradation of misfolded proteins. The sequence is that of ATP-dependent Clp protease proteolytic subunit from Psilotum nudum (Whisk fern).